The primary structure comprises 157 residues: Subgroup A Rous sarcoma virus receptor pg950 (157 aa).

Positions 1–19 (MARLLPALLLLLLPGNVTG) are cleaved as a signal peptide. N-linked (GlcNAc...) asparagine glycans are attached at residues Asn20 and Asn24. Topologically, residues 20 to 102 (NGSGNGSLSR…RALPARNHGR (83 aa)) are extracellular. In terms of domain architecture, LDL-receptor class A spans 28–71 (SRCPPGQFRCSEPPGAHGECYPQDWLCDGHPDCDDGRDEWGCGT). Intrachain disulfides connect Cys30-Cys47, Cys37-Cys60, and Cys54-Cys69. Asn81 carries an N-linked (GlcNAc...) asparagine glycan. The helical transmembrane segment at 103–125 (MWMLITAVLLCCLVAVGGIAAWG) threads the bilayer. The Cytoplasmic portion of the chain corresponds to 126 to 157 (KSKAKSRSDIFSLASASKELLVPDKSQADLFS).

(Microbial infection) Interacts with Rous sarcoma virus envelope protein; this interaction allows the viral attachment.

Its subcellular location is the membrane. Functionally, responsible for susceptibility to the retrovirus subgroup A Rous sarcoma virus. This chain is Subgroup A Rous sarcoma virus receptor pg950, found in Coturnix japonica (Japanese quail).